Reading from the N-terminus, the 713-residue chain is Leucine-rich repeat neuronal protein 2 (713 aa).

The first 18 residues, 1-18, serve as a signal peptide directing secretion; that stretch reads MRLLVAPLLLAWVAGATA. The Extracellular portion of the chain corresponds to 19–630; it reads AVPVVPWHVP…CHRALGDRPG (612 aa). Positions 20–69 constitute an LRRNT domain; it reads VPVVPWHVPCPPQCACQIRPWYTPRSSYREATTVDCNDLFLTAVPPALPA. LRR repeat units lie at residues 70-91, 94-115, 118-139, 142-163, 166-187, 190-211, 214-235, 238-259, 262-283, 286-305, 311-333, and 336-357; these read GTQT…ELGY, NLTE…DFHA, QLLS…SFAG, SLQE…AFSG, NLLR…WFEM, NLEI…NFRP, NLRS…ALEG, SLES…ALEQ, GLKF…DFAN, HLKE…DKFA, ELTK…AFHH, and QMET…TVES. An N-linked (GlcNAc...) asparagine glycan is attached at Asn94. Residues 369–422 enclose the LRRCT domain; it reads NPIRCDCVIRWANATGTRVRFIEPQSTLCAEPPDLQRLPVREVPFREMTDHCLP. N-linked (GlcNAc...) asparagine glycosylation is present at Asn381. The Ig-like C2-type domain occupies 422–511; sequence PLISPRSFPP…LVGADTKTVS (90 aa). A disulfide bridge links Cys445 with Cys497. N-linked (GlcNAc...) asparagine glycosylation is found at Asn555 and Asn583. A helical membrane pass occupies residues 631-651; that stretch reads LIAILALAVLLLAAGLAAHLG. The Cytoplasmic segment spans residues 652-713; that stretch reads TGQPRKGVGG…TLLPPLSQNS (62 aa).

In terms of tissue distribution, overamplified in malignant gliomas.

The protein localises to the membrane. This Homo sapiens (Human) protein is Leucine-rich repeat neuronal protein 2 (LRRN2).